The sequence spans 240 residues: 6-carboxyhexanoate--CoA ligase (240 aa).

This sequence belongs to the BioW family. Homodimer. Mg(2+) is required as a cofactor.

The enzyme catalyses heptanedioate + ATP + CoA = 6-carboxyhexanoyl-CoA + AMP + diphosphate. The protein operates within metabolic intermediate metabolism; pimeloyl-CoA biosynthesis; pimeloyl-CoA from pimelate: step 1/1. Functionally, catalyzes the transformation of pimelate into pimeloyl-CoA with concomitant hydrolysis of ATP to AMP. The chain is 6-carboxyhexanoate--CoA ligase from Aquifex aeolicus (strain VF5).